An 876-amino-acid polypeptide reads, in one-letter code: DDB1- and CUL4-associated factor 6 (876 aa).

WD repeat units follow at residues 49–88, 92–133, 139–179, 189–229, and 251–290; these read VHDGCVNTICWNDTGEYILSGSDDTKLVISNPYSRKVLTT, GHRA…ETNR, CHYG…SCTK, NCRR…TRAT, and NKSCRVTSLCYSEDGQEILVSYSSDYIYLFDPKDDTAREL. Basic and acidic residues-rich tracts occupy residues 288–303 and 312–334; these read RELKTPSAEERREELR and LRGDWSDTGPRARPESERERDGE. 5 disordered regions span residues 288 to 340, 355 to 391, 408 to 485, 498 to 645, and 658 to 691; these read RELK…PNVS, EASEVAQSNRGRGRPRPRGGTNQPDVSTLPTVPSSPN, LQPS…TEGT, WSST…NPEL, and EDPSARDSALQDTDDSDDDPVLIPGARYRTGPGD. The residue at position 336 (S336) is a Phosphoserine. 2 stretches are compositionally biased toward polar residues: residues 375 to 391 and 409 to 422; these read TNQPDVSTLPTVPSSPN and QPSTSSTDPVQAQA. The segment covering 456–466 has biased composition (basic and acidic residues); sequence HQSDNSNERLS. Over residues 499-510 the composition is skewed to low complexity; it reads SSTASSSRGNGS. Residues 534–544 are compositionally biased toward basic and acidic residues; sequence SETRAPEELSE. Composition is skewed to polar residues over residues 550 to 562, 571 to 584, 603 to 613, and 621 to 645; these read ENLTQNQIDTAQL, DSNSGEKNNPSQDS, EQASTESATRH, and PSQTEAIEQASTESATRHTSANPEL. S665 is subject to Phosphoserine. T670 is subject to Phosphothreonine. Phosphoserine is present on S673. The region spanning 692-721 is the IQ domain; the sequence is RRSAVARIQEFFRRRKERKEMEELDTLNIR. 2 WD repeats span residues 734–772 and 775–814; these read NSRTMIKEANFWGANFVMSGSDCGHIFIWDRHTAEHLML and ADNHVVNCLQPHPFDPILASSGIDYDIKIWSPLEESRIFN. Phosphoserine occurs at positions 863 and 866.

In terms of assembly, interacts with the nuclear receptors NR3C1 and AR in the presence of ligand. Interacts with DDB1, CUL4A and CUL4B.

The protein resides in the nucleus. It functions in the pathway protein modification; protein ubiquitination. Ligand-dependent coactivator of nuclear receptors. Enhance transcriptional activity of the nuclear receptors NR3C1 and AR. May function as a substrate receptor for CUL4-DDB1 E3 ubiquitin-protein ligase complex. In Mus musculus (Mouse), this protein is DDB1- and CUL4-associated factor 6 (Dcaf6).